Here is a 90-residue protein sequence, read N- to C-terminus: Barrier-to-autointegration factor B (90 aa).

This sequence belongs to the BAF family. In terms of assembly, homodimer. Interacts with nemp1a and nemp1b.

Its subcellular location is the nucleus. It is found in the chromosome. The protein resides in the nucleus envelope. The protein localises to the cytoplasm. Non-specific DNA-binding protein that plays key roles in mitotic nuclear reassembly, chromatin organization, DNA damage response, gene expression and intrinsic immunity against foreign DNA. Contains two non-specific double-stranded DNA (dsDNA)-binding sites which promote DNA cross-bridging. Plays a key role in nuclear membrane reformation at the end of mitosis by driving formation of a single nucleus in a spindle-independent manner. Transiently cross-bridges anaphase chromosomes via its ability to bridge distant DNA sites, leading to the formation of a dense chromatin network at the chromosome ensemble surface that limits membranes to the surface. Also acts as a negative regulator of innate immune activation by restricting CGAS activity toward self-DNA upon acute loss of nuclear membrane integrity. Outcompetes CGAS for DNA-binding, thereby preventing CGAS activation and subsequent damaging autoinflammatory responses. Also involved in DNA damage response; acts by inhibiting the ADP-ribosyltransferase activity of PARP1. Involved in the recognition of exogenous dsDNA in the cytosol: associates with exogenous dsDNA immediately after its appearance in the cytosol at endosome breakdown and is required to avoid autophagy. This chain is Barrier-to-autointegration factor B (banf1-b), found in Xenopus laevis (African clawed frog).